A 140-amino-acid polypeptide reads, in one-letter code: Nucleoside diphosphate kinase (140 aa).

ATP contacts are provided by K11, F59, R87, T93, R104, and N114. H117 serves as the catalytic Pros-phosphohistidine intermediate.

Belongs to the NDK family. As to quaternary structure, homotetramer. It depends on Mg(2+) as a cofactor.

The protein resides in the cytoplasm. It carries out the reaction a 2'-deoxyribonucleoside 5'-diphosphate + ATP = a 2'-deoxyribonucleoside 5'-triphosphate + ADP. The enzyme catalyses a ribonucleoside 5'-diphosphate + ATP = a ribonucleoside 5'-triphosphate + ADP. Functionally, major role in the synthesis of nucleoside triphosphates other than ATP. The ATP gamma phosphate is transferred to the NDP beta phosphate via a ping-pong mechanism, using a phosphorylated active-site intermediate. The protein is Nucleoside diphosphate kinase of Granulibacter bethesdensis (strain ATCC BAA-1260 / CGDNIH1).